We begin with the raw amino-acid sequence, 266 residues long: Small ribosomal subunit protein uS2 (266 aa).

The disordered stretch occupies residues 233 to 266 (AVREEEFASAPDAGKKGRQAQPKKGKRASDAAAE). Positions 248–258 (KGRQAQPKKGK) are enriched in basic residues.

Belongs to the universal ribosomal protein uS2 family.

The chain is Small ribosomal subunit protein uS2 from Xylella fastidiosa (strain M23).